We begin with the raw amino-acid sequence, 279 residues long: Large ribosomal subunit protein uL2 (279 aa).

The interval Val-223–Arg-279 is disordered. Positions Val-270 to Arg-279 are enriched in basic residues.

The protein belongs to the universal ribosomal protein uL2 family. Part of the 50S ribosomal subunit. Forms a bridge to the 30S subunit in the 70S ribosome.

Functionally, one of the primary rRNA binding proteins. Required for association of the 30S and 50S subunits to form the 70S ribosome, for tRNA binding and peptide bond formation. It has been suggested to have peptidyltransferase activity; this is somewhat controversial. Makes several contacts with the 16S rRNA in the 70S ribosome. The polypeptide is Large ribosomal subunit protein uL2 (Leptospira borgpetersenii serovar Hardjo-bovis (strain JB197)).